Consider the following 176-residue polypeptide: Large ribosomal subunit protein uL6 (176 aa).

Belongs to the universal ribosomal protein uL6 family. As to quaternary structure, part of the 50S ribosomal subunit.

In terms of biological role, this protein binds to the 23S rRNA, and is important in its secondary structure. It is located near the subunit interface in the base of the L7/L12 stalk, and near the tRNA binding site of the peptidyltransferase center. This chain is Large ribosomal subunit protein uL6, found in Burkholderia ambifaria (strain MC40-6).